The chain runs to 189 residues: Xanthine phosphoribosyltransferase (189 aa).

Leucine 20 and asparagine 27 together coordinate xanthine. A 5-phospho-alpha-D-ribose 1-diphosphate-binding site is contributed by 128–132 (ANGEA). Lysine 156 contributes to the xanthine binding site.

The protein belongs to the purine/pyrimidine phosphoribosyltransferase family. Xpt subfamily. Homodimer.

Its subcellular location is the cytoplasm. The catalysed reaction is XMP + diphosphate = xanthine + 5-phospho-alpha-D-ribose 1-diphosphate. The protein operates within purine metabolism; XMP biosynthesis via salvage pathway; XMP from xanthine: step 1/1. In terms of biological role, converts the preformed base xanthine, a product of nucleic acid breakdown, to xanthosine 5'-monophosphate (XMP), so it can be reused for RNA or DNA synthesis. In Lactobacillus delbrueckii subsp. bulgaricus (strain ATCC 11842 / DSM 20081 / BCRC 10696 / JCM 1002 / NBRC 13953 / NCIMB 11778 / NCTC 12712 / WDCM 00102 / Lb 14), this protein is Xanthine phosphoribosyltransferase.